We begin with the raw amino-acid sequence, 488 residues long: Leucine-rich repeat-containing protein 74A (488 aa).

LRR repeat units follow at residues 134-155 (AVTK…SLVE), 162-182 (YLQE…RIIS), 191-212 (SIWS…LLCQ), 219-239 (QIKK…EHLG), 247-268 (GLTS…ALCN), 275-296 (TLTK…ALGE), 303-324 (CLVY…KISK), and 331-351 (SLRV…ILLI).

The sequence is that of Leucine-rich repeat-containing protein 74A from Homo sapiens (Human).